The chain runs to 589 residues: Acyl-CoA ligase SID4 (589 aa).

Positions 12–20 match the PTS2-type peroxisomal targeting signal motif; that stretch reads RLQQTLNHI. ATP contacts are provided by residues 228–236, 367–372, Asp458, and Arg473; these read TSGSTGNPK and SSYGLT. Thr372 serves as a coordination point for substrate. CoA is bound by residues 481–483, Lys547, and 555–557; these read GGE and FGL. Residue Lys572 coordinates ATP.

The protein belongs to the ATP-dependent AMP-binding enzyme family.

It is found in the peroxisome. The protein operates within siderophore biosynthesis. Its function is as follows. Acyl-CoA ligase; part of the gene cluster that mediates the biosynthesis of hydroxamate-containing siderophores that play a critical role in virulence via intracellular iron acquisition during macrophage infection. This is Acyl-CoA ligase SID4 from Ajellomyces capsulatus (Darling's disease fungus).